The primary structure comprises 226 residues: PKHD-type hydroxylase Plav_0377 (226 aa).

The region spanning 78–178 is the Fe2OG dioxygenase domain; it reads KVLPPRFNRY…RLASFFWVQS (101 aa). Histidine 96, aspartate 98, and histidine 159 together coordinate Fe cation. Residue arginine 169 coordinates 2-oxoglutarate.

It depends on Fe(2+) as a cofactor. L-ascorbate serves as cofactor.

This chain is PKHD-type hydroxylase Plav_0377, found in Parvibaculum lavamentivorans (strain DS-1 / DSM 13023 / NCIMB 13966).